Consider the following 703-residue polypeptide: Methionine--tRNA ligase (703 aa).

Residues 15–25 carry the 'HIGH' region motif; that stretch reads PYANGPVHLGH. Zn(2+)-binding residues include C147, C150, C160, and C163. Positions 345–349 match the 'KMSKS' region motif; that stretch reads KFSKS. Position 348 (K348) interacts with ATP. A tRNA-binding domain is found at 602–703; the sequence is DFQKIDLRVA…GEGINGNSVS (102 aa).

This sequence belongs to the class-I aminoacyl-tRNA synthetase family. MetG type 1 subfamily. Homodimer. Zn(2+) is required as a cofactor.

The protein resides in the cytoplasm. It carries out the reaction tRNA(Met) + L-methionine + ATP = L-methionyl-tRNA(Met) + AMP + diphosphate. Functionally, is required not only for elongation of protein synthesis but also for the initiation of all mRNA translation through initiator tRNA(fMet) aminoacylation. The sequence is that of Methionine--tRNA ligase from Chlorobaculum tepidum (strain ATCC 49652 / DSM 12025 / NBRC 103806 / TLS) (Chlorobium tepidum).